Reading from the N-terminus, the 159-residue chain is ATP synthase subunit b (159 aa).

A helical transmembrane segment spans residues 7-27; the sequence is DFIWTLINFFVLLFILKILLY.

The protein belongs to the ATPase B chain family. F-type ATPases have 2 components, F(1) - the catalytic core - and F(0) - the membrane proton channel. F(1) has five subunits: alpha(3), beta(3), gamma(1), delta(1), epsilon(1). F(0) has three main subunits: a(1), b(2) and c(10-14). The alpha and beta chains form an alternating ring which encloses part of the gamma chain. F(1) is attached to F(0) by a central stalk formed by the gamma and epsilon chains, while a peripheral stalk is formed by the delta and b chains.

Its subcellular location is the cell membrane. F(1)F(0) ATP synthase produces ATP from ADP in the presence of a proton or sodium gradient. F-type ATPases consist of two structural domains, F(1) containing the extramembraneous catalytic core and F(0) containing the membrane proton channel, linked together by a central stalk and a peripheral stalk. During catalysis, ATP synthesis in the catalytic domain of F(1) is coupled via a rotary mechanism of the central stalk subunits to proton translocation. In terms of biological role, component of the F(0) channel, it forms part of the peripheral stalk, linking F(1) to F(0). This chain is ATP synthase subunit b, found in Carboxydothermus hydrogenoformans (strain ATCC BAA-161 / DSM 6008 / Z-2901).